The primary structure comprises 312 residues: uncharacterized protein (312 aa).

Belongs to the asfivirus CP312R family.

The protein resides in the virion. This is an uncharacterized protein from African swine fever virus (isolate Tick/Malawi/Lil 20-1/1983) (ASFV).